We begin with the raw amino-acid sequence, 266 residues long: Vitamin B12-binding protein (266 aa).

The N-terminal stretch at 1-22 is a signal peptide; that stretch reads MAKQMFRALGALLLTLPVWLYA. The 242-residue stretch at 25–266 folds into the Fe/B12 periplasmic-binding domain; it reads RVITLSPANT…QLCNALSQVN (242 aa). Residues Y50 and 242 to 246 each bind cyanocob(III)alamin; that span reads DWFER. C183 and C259 form a disulfide bridge.

The protein belongs to the BtuF family. As to quaternary structure, the complex is composed of two ATP-binding proteins (BtuD), two transmembrane proteins (BtuC) and a solute-binding protein (BtuF).

The protein resides in the periplasm. Its function is as follows. Part of the ABC transporter complex BtuCDF involved in vitamin B12 import. Binds vitamin B12 and delivers it to the periplasmic surface of BtuC. The polypeptide is Vitamin B12-binding protein (Salmonella typhi).